The sequence spans 163 residues: Crossover junction endodeoxyribonuclease RuvC (163 aa).

Residues Asp-7, Glu-67, and Asp-140 contribute to the active site. 3 residues coordinate Mg(2+): Asp-7, Glu-67, and Asp-140.

Belongs to the RuvC family. As to quaternary structure, homodimer which binds Holliday junction (HJ) DNA. The HJ becomes 2-fold symmetrical on binding to RuvC with unstacked arms; it has a different conformation from HJ DNA in complex with RuvA. In the full resolvosome a probable DNA-RuvA(4)-RuvB(12)-RuvC(2) complex forms which resolves the HJ. The cofactor is Mg(2+).

The protein localises to the cytoplasm. The catalysed reaction is Endonucleolytic cleavage at a junction such as a reciprocal single-stranded crossover between two homologous DNA duplexes (Holliday junction).. Its function is as follows. The RuvA-RuvB-RuvC complex processes Holliday junction (HJ) DNA during genetic recombination and DNA repair. Endonuclease that resolves HJ intermediates. Cleaves cruciform DNA by making single-stranded nicks across the HJ at symmetrical positions within the homologous arms, yielding a 5'-phosphate and a 3'-hydroxyl group; requires a central core of homology in the junction. The consensus cleavage sequence is 5'-(A/T)TT(C/G)-3'. Cleavage occurs on the 3'-side of the TT dinucleotide at the point of strand exchange. HJ branch migration catalyzed by RuvA-RuvB allows RuvC to scan DNA until it finds its consensus sequence, where it cleaves and resolves the cruciform DNA. This is Crossover junction endodeoxyribonuclease RuvC from Petrotoga mobilis (strain DSM 10674 / SJ95).